The sequence spans 173 residues: Photosystem I assembly protein Ycf3 (173 aa).

TPR repeat units lie at residues 35-68, 72-105, and 120-153; these read AYVY…EESP, SETL…NSNQ, and GRTA…YPGG.

This sequence belongs to the Ycf3 family.

It localises to the cellular thylakoid membrane. In terms of biological role, essential for the assembly of the photosystem I (PSI) complex. May act as a chaperone-like factor to guide the assembly of the PSI subunits. This is Photosystem I assembly protein Ycf3 from Prochlorococcus marinus (strain MIT 9313).